The sequence spans 466 residues: Methylenetetrahydrofolate--tRNA-(uracil-5-)-methyltransferase TrmFO (466 aa).

FAD is bound at residue 14–19 (GGGLAG).

It belongs to the MnmG family. TrmFO subfamily. Requires FAD as cofactor.

It is found in the cytoplasm. It carries out the reaction uridine(54) in tRNA + (6R)-5,10-methylene-5,6,7,8-tetrahydrofolate + NADH + H(+) = 5-methyluridine(54) in tRNA + (6S)-5,6,7,8-tetrahydrofolate + NAD(+). It catalyses the reaction uridine(54) in tRNA + (6R)-5,10-methylene-5,6,7,8-tetrahydrofolate + NADPH + H(+) = 5-methyluridine(54) in tRNA + (6S)-5,6,7,8-tetrahydrofolate + NADP(+). Catalyzes the folate-dependent formation of 5-methyl-uridine at position 54 (M-5-U54) in all tRNAs. The polypeptide is Methylenetetrahydrofolate--tRNA-(uracil-5-)-methyltransferase TrmFO (Brucella melitensis biotype 1 (strain ATCC 23456 / CCUG 17765 / NCTC 10094 / 16M)).